A 107-amino-acid chain; its full sequence is U1-lycotoxin-Ls1b (107 aa).

Positions 1-20 (MMKVLVVVALLVTLISYSSS) are cleaved as a signal peptide. Residues 21–41 (EGIDDLEADELLSLMADEQTR) constitute a propeptide that is removed on maturation. Disulfide bonds link Cys-44-Cys-59, Cys-51-Cys-68, Cys-58-Cys-86, and Cys-70-Cys-84.

This sequence belongs to the neurotoxin 19 (CSTX) family. 04 (U1-Lctx) subfamily. Expressed by the venom gland.

It is found in the secreted. This chain is U1-lycotoxin-Ls1b, found in Lycosa singoriensis (Wolf spider).